A 147-amino-acid chain; its full sequence is Ubiquitin-conjugating enzyme E2 D1 (147 aa).

The region spanning 1–147 (MALKRIQKEL…AREWTQKYAM (147 aa)) is the UBC core domain. Cys-85 acts as the Glycyl thioester intermediate in catalysis.

The protein belongs to the ubiquitin-conjugating enzyme family. In terms of assembly, component of a E3 ubiquitin ligase complex containing UBE2D1, SIAH1, CACYBP/SIP, SKP1, APC and TBL1X. Interacts with RNF11. In terms of processing, autoubiquitinated.

The protein localises to the cytoplasm. The catalysed reaction is S-ubiquitinyl-[E1 ubiquitin-activating enzyme]-L-cysteine + [E2 ubiquitin-conjugating enzyme]-L-cysteine = [E1 ubiquitin-activating enzyme]-L-cysteine + S-ubiquitinyl-[E2 ubiquitin-conjugating enzyme]-L-cysteine.. The enzyme catalyses S-ubiquitinyl-[E1 ubiquitin-activating enzyme]-L-cysteine + [acceptor protein]-L-lysine = [E1 ubiquitin-activating enzyme]-L-cysteine + N(6)-monoubiquitinyl-[acceptor protein]-L-lysine.. Its pathway is protein modification; protein ubiquitination. Accepts ubiquitin from the E1 complex and catalyzes its covalent attachment to other proteins. In vitro catalyzes 'Lys-48'-linked polyubiquitination. Mediates the selective degradation of short-lived and abnormal proteins. Functions in the E6/E6-AP-induced ubiquitination of p53/TP53. Mediates ubiquitination of PEX5 and auto-ubiquitination of STUB1, TRAF6 and TRIM63/MURF1. Ubiquitinates STUB1-associated HSP90AB1 in vitro. Lacks inherent specificity for any particular lysine residue of ubiquitin. Essential for viral activation of IRF3. Mediates polyubiquitination of CYP3A4. The chain is Ubiquitin-conjugating enzyme E2 D1 (UBE2D1) from Bos taurus (Bovine).